The sequence spans 486 residues: Malonate-semialdehyde dehydrogenase (486 aa).

5 residues coordinate NAD(+): Phe154, Lys178, Glu181, Arg182, and Ser231. The Nucleophile role is filled by Cys286. An NAD(+)-binding site is contributed by Glu386.

Belongs to the aldehyde dehydrogenase family. IolA subfamily. Homotetramer.

It carries out the reaction 3-oxopropanoate + NAD(+) + CoA + H2O = hydrogencarbonate + acetyl-CoA + NADH + H(+). It catalyses the reaction 2-methyl-3-oxopropanoate + NAD(+) + CoA + H2O = propanoyl-CoA + hydrogencarbonate + NADH + H(+). It functions in the pathway polyol metabolism; myo-inositol degradation into acetyl-CoA; acetyl-CoA from myo-inositol: step 7/7. Functionally, catalyzes the oxidation of malonate semialdehyde (MSA) and methylmalonate semialdehyde (MMSA) into acetyl-CoA and propanoyl-CoA, respectively. Is involved in a myo-inositol catabolic pathway. Bicarbonate, and not CO2, is the end-product of the enzymatic reaction. In Bacillus cytotoxicus (strain DSM 22905 / CIP 110041 / 391-98 / NVH 391-98), this protein is Malonate-semialdehyde dehydrogenase.